The primary structure comprises 405 residues: 3-hydroxy-3-methylglutaryl-coenzyme A reductase (405 aa).

Residues Glu101 and Asp305 each act as charge relay system in the active site. His400 acts as the Proton donor in catalysis.

The protein belongs to the HMG-CoA reductase family. In terms of assembly, homodimer.

It localises to the cytoplasm. It carries out the reaction (R)-mevalonate + 2 NADP(+) + CoA = (3S)-3-hydroxy-3-methylglutaryl-CoA + 2 NADPH + 2 H(+). It participates in metabolic intermediate biosynthesis; (R)-mevalonate biosynthesis; (R)-mevalonate from acetyl-CoA: step 3/3. Its activity is regulated as follows. Is competitively inhibited by lovastatin (formerly called mevinolin). Lovastatin also blocks the growth of H.salinarum, and this effect is reversed by addition of mevalonate, indicating the critical role that the mevalonate pathway plays in isoprenoid biosynthesis by these archaea. Catalyzes the NADPH-dependent reductive deacylation of (S)-3-hydroxy-3-methylglutaryl-CoA (HMG-CoA) to (R)-mevalonate. Cannot use NADH instead of NADPH. Functions in the mevalonate (MVA) pathway leading to isopentenyl diphosphate (IPP), a key precursor for the biosynthesis of isoprenoid compounds such as archaeal membrane lipids. This chain is 3-hydroxy-3-methylglutaryl-coenzyme A reductase (hmgA), found in Halobacterium salinarum (strain ATCC 29341 / DSM 671 / R1).